The sequence spans 202 residues: Outer-membrane lipoprotein carrier protein (202 aa).

Residues 1–18 (MNRLFLILLLIFSHEVFS) form the signal peptide.

It belongs to the LolA family. As to quaternary structure, monomer.

Its subcellular location is the periplasm. Functionally, participates in the translocation of lipoproteins from the inner membrane to the outer membrane. Only forms a complex with a lipoprotein if the residue after the N-terminal Cys is not an aspartate (The Asp acts as a targeting signal to indicate that the lipoprotein should stay in the inner membrane). The sequence is that of Outer-membrane lipoprotein carrier protein from Legionella pneumophila (strain Lens).